We begin with the raw amino-acid sequence, 577 residues long: Maltase A1 (577 aa).

The first 19 residues, 1–19 (MRPQSAACLLLAIVGFVGA), serve as a signal peptide directing secretion. N-linked (GlcNAc...) asparagine glycans are attached at residues asparagine 119 and asparagine 151. Catalysis depends on aspartate 221, which acts as the Nucleophile. Asparagine 244 carries an N-linked (GlcNAc...) asparagine glycan. The active-site Proton donor is glutamate 297. Residues asparagine 315 and asparagine 331 are each glycosylated (N-linked (GlcNAc...) asparagine).

The protein belongs to the glycosyl hydrolase 13 family.

The catalysed reaction is Hydrolysis of terminal, non-reducing (1-&gt;4)-linked alpha-D-glucose residues with release of alpha-D-glucose.. The chain is Maltase A1 (Mal-A1) from Drosophila melanogaster (Fruit fly).